A 103-amino-acid polypeptide reads, in one-letter code: Large ribosomal subunit protein uL24 (103 aa).

The protein belongs to the universal ribosomal protein uL24 family. Part of the 50S ribosomal subunit.

In terms of biological role, one of two assembly initiator proteins, it binds directly to the 5'-end of the 23S rRNA, where it nucleates assembly of the 50S subunit. One of the proteins that surrounds the polypeptide exit tunnel on the outside of the subunit. In Christiangramia forsetii (strain DSM 17595 / CGMCC 1.15422 / KT0803) (Gramella forsetii), this protein is Large ribosomal subunit protein uL24.